Here is a 423-residue protein sequence, read N- to C-terminus: O-methyltransferase aoiF (423 aa).

Residue Asp-273 coordinates S-adenosyl-L-methionine. The active-site Proton acceptor is the His-324.

This sequence belongs to the class I-like SAM-binding methyltransferase superfamily. Cation-independent O-methyltransferase family.

Its pathway is secondary metabolite biosynthesis. O-methyltransferase; part of the gene cluster that mediates the biosynthesis of a methylated derivative of known natural products orthosporin and diaporthin. Within the pathway, aoiF catalyzes the biotransformation of orthosporin to diaporthin but also of diaporthin to the final product, by performing a tandem methylation of the polyketide core. Orthosporin is produced by an oxidoreductase that has still to be identified and that catalyzes the stereospecific reduction of the carbonyl moiety of the hexaketide isocoumarin scaffold produced by the non-reducing polyketide synthase aoiG to generate the S-configured secondary alcohol at C-11. The protein is O-methyltransferase aoiF of Aspergillus oryzae (strain ATCC 42149 / RIB 40) (Yellow koji mold).